The chain runs to 295 residues: Phosphatidylserine decarboxylase proenzyme (295 aa).

Catalysis depends on charge relay system; for autoendoproteolytic cleavage activity residues D113, H169, and S256. Residue S256 is the Schiff-base intermediate with substrate; via pyruvic acid; for decarboxylase activity of the active site. Position 256 is a pyruvic acid (Ser); by autocatalysis (S256).

It belongs to the phosphatidylserine decarboxylase family. PSD-B subfamily. Prokaryotic type II sub-subfamily. In terms of assembly, heterodimer of a large membrane-associated beta subunit and a small pyruvoyl-containing alpha subunit. Pyruvate serves as cofactor. In terms of processing, is synthesized initially as an inactive proenzyme. Formation of the active enzyme involves a self-maturation process in which the active site pyruvoyl group is generated from an internal serine residue via an autocatalytic post-translational modification. Two non-identical subunits are generated from the proenzyme in this reaction, and the pyruvate is formed at the N-terminus of the alpha chain, which is derived from the carboxyl end of the proenzyme. The autoendoproteolytic cleavage occurs by a canonical serine protease mechanism, in which the side chain hydroxyl group of the serine supplies its oxygen atom to form the C-terminus of the beta chain, while the remainder of the serine residue undergoes an oxidative deamination to produce ammonia and the pyruvoyl prosthetic group on the alpha chain. During this reaction, the Ser that is part of the protease active site of the proenzyme becomes the pyruvoyl prosthetic group, which constitutes an essential element of the active site of the mature decarboxylase.

The protein resides in the cell membrane. The enzyme catalyses a 1,2-diacyl-sn-glycero-3-phospho-L-serine + H(+) = a 1,2-diacyl-sn-glycero-3-phosphoethanolamine + CO2. It participates in phospholipid metabolism; phosphatidylethanolamine biosynthesis; phosphatidylethanolamine from CDP-diacylglycerol: step 2/2. Catalyzes the formation of phosphatidylethanolamine (PtdEtn) from phosphatidylserine (PtdSer). This is Phosphatidylserine decarboxylase proenzyme from Clostridium botulinum (strain Kyoto / Type A2).